A 216-amino-acid chain; its full sequence is U1 small nuclear ribonucleoprotein C (216 aa).

A Matrin-type zinc finger spans residues 4 to 36 (FFCDYCDVYLTHDSMSVRKAHNSGRNHLRNVVD). Disordered stretches follow at residues 70–89 (PQNQ…PGAG) and 125–216 (PGGI…ADKR). Composition is skewed to pro residues over residues 140-149 (PPMPPFPGMP) and 157-204 (GVPP…PPFG).

This sequence belongs to the U1 small nuclear ribonucleoprotein C family. In terms of assembly, U1 snRNP is composed of the 7 core Sm proteins B/B', D1, D2, D3, E, F and G that assemble in a heptameric protein ring on the Sm site of the small nuclear RNA to form the core snRNP, and at least 3 U1 snRNP-specific proteins U1-70K, U1-A and U1-C. U1-C interacts with U1 snRNA and the 5' splice-site region of the pre-mRNA.

It localises to the nucleus. Functionally, component of the spliceosomal U1 snRNP, which is essential for recognition of the pre-mRNA 5' splice-site and the subsequent assembly of the spliceosome. U1-C is directly involved in initial 5' splice-site recognition for both constitutive and regulated alternative splicing. The interaction with the 5' splice-site seems to precede base-pairing between the pre-mRNA and the U1 snRNA. Stimulates commitment or early (E) complex formation by stabilizing the base pairing of the 5' end of the U1 snRNA and the 5' splice-site region. The chain is U1 small nuclear ribonucleoprotein C from Neurospora crassa (strain ATCC 24698 / 74-OR23-1A / CBS 708.71 / DSM 1257 / FGSC 987).